The following is a 415-amino-acid chain: Ammonium transporter Rh type A (415 aa).

Over 1 to 2 (MR) the chain is Cytoplasmic. A helical membrane pass occupies residues 3–23 (FIFPTIAVLLEASMIVLFGFF). Residues 24 to 51 (VKYETEQNAIQQPNSTNSTKVDRSLELY) are Extracellular-facing. Asparagine 37 and asparagine 40 each carry an N-linked (GlcNAc...) asparagine glycan. Residues 52–72 (PLFQDVHVMIFVGFGFLMTFL) traverse the membrane as a helical segment. Residues 73-76 (KKYG) are Cytoplasmic-facing. Residues 77–97 (FSSVGINLLIAALGLQWGTFV) form a helical membrane-spanning segment. Topologically, residues 98 to 115 (QGMVHRHGQTIYIGIKNM) are extracellular. A helical membrane pass occupies residues 116-136 (INADFSTATVLISFGAVLGKI). Over 137 to 142 (SPTQML) the chain is Cytoplasmic. A helical membrane pass occupies residues 143–163 (IMTIIEITVFAGNEYVVGEIF). At 164 to 167 (QASD) the chain is on the extracellular side. The chain crosses the membrane as a helical span at residues 168 to 188 (IGASMTIHAFGAYFGLAVAGV). The Cytoplasmic segment spans residues 189–208 (LYRTGLRKGHEKEESEYHSD). A helical transmembrane segment spans residues 209–229 (LFAMIGTLFLWMFWPSFNSAI). Residues 230-236 (AETAEEQ) lie on the Extracellular side of the membrane. The helical transmembrane segment at 237–257 (YLAIINTYLSLVACVLTAYAM) threads the bilayer. Topologically, residues 258 to 268 (SSLVGHRGKLD) are cytoplasmic. Residues 269-287 (MVHIQNATLAGGVAVGTCA) form a helical membrane-spanning segment. At 288–290 (DMK) the chain is on the extracellular side. Residues 291 to 311 (IHPYGSLIIGSIAGMVSVLGF) traverse the membrane as a helical segment. Residues 312–332 (RFLTPCLTAKLRIHDTCGVHN) are Cytoplasmic-facing. A helical transmembrane segment spans residues 333–353 (LHGLPGVVGGLSSIVAILLGV). Residues 354 to 363 (STASSMTMQA) are Extracellular-facing. The chain crosses the membrane as a helical span at residues 364–384 (AALGSSIGSAIAGGLITGLIL). The Cytoplasmic segment spans residues 385–415 (RFIVRGQPSKDNFFDDSVYWEVPKEKELDNV).

The protein belongs to the ammonium transporter (TC 2.A.49) family. Rh subfamily. In terms of assembly, homodimer. Heterotrimer; a RHCE monomer interacts with a RHAG homodimer. Component of the ankyrin-1 complex in the erythrocyte, composed of ANK1, RHCE, RHAG, SLC4A1, EPB42, GYPA, GYPB and AQP1. Interacts with GYPB (via the N-terminal); this interaction bridges the (RHAG)2(RHCE) heterotrimer with the SLC4A1 Band 3 I dimer complexed with GYPA. Post-translationally, glycosylated.

It localises to the membrane. It catalyses the reaction methylamine(out) = methylamine(in). The catalysed reaction is NH4(+)(in) = NH4(+)(out). The enzyme catalyses CO2(out) = CO2(in). In terms of biological role, component of the ankyrin-1 complex, a multiprotein complex involved in the stability and shape of the erythrocyte membrane. Heterotrimer with RHCE (RHAG)2(RHCE), that transports ammonium and its related derivative methylammonium, in both neutral and ionic forms, across the erythrocyte membrane. The transport of NH4(+) is electrogenic and masks the NH3 transport. Also, may act as a CO2 channel. Moreover in erythrocyte, regulates RHD membrane expression and is associated with rhesus blood group antigen expression. In Canis lupus familiaris (Dog), this protein is Ammonium transporter Rh type A.